Consider the following 407-residue polypeptide: Protein S-acyltransferase 8 (407 aa).

The next 2 helical transmembrane spans lie at 29–49 (SLPL…VFVA) and 62–82 (GYAI…LLFF). One can recognise a DHHC domain in the interval 136-186 (KYCDTCMLYRPPRCSHCSICNNCVERFDHHCPWVGQCIGLRNYRYFFMFVS). C166 acts as the S-palmitoyl cysteine intermediate in catalysis. 2 helical membrane-spanning segments follow: residues 181–201 (FFMF…MSAV) and 224–244 (AVVL…LTAF). The disordered stretch occupies residues 348 to 368 (AEDANNNQPHHTLDIDHERAG). A compositionally biased stretch (basic and acidic residues) spans 358-368 (HTLDIDHERAG). Position 385 is a phosphoserine (S385).

Belongs to the DHHC palmitoyltransferase family. As to expression, expressed in flowers and pollen.

It is found in the cell membrane. The catalysed reaction is L-cysteinyl-[protein] + hexadecanoyl-CoA = S-hexadecanoyl-L-cysteinyl-[protein] + CoA. S-acyltransferase involved in protein lipid modification. The protein is Protein S-acyltransferase 8 (PAT08) of Arabidopsis thaliana (Mouse-ear cress).